A 407-amino-acid polypeptide reads, in one-letter code: Argininosuccinate synthase (407 aa).

Residues alanine 13–serine 21 and alanine 40 each bind ATP. 2 residues coordinate L-citrulline: tyrosine 91 and serine 96. Glycine 121 lines the ATP pocket. L-aspartate-binding residues include threonine 123, asparagine 127, and aspartate 128. Asparagine 127 is an L-citrulline binding site. Positions 131, 182, 191, 267, and 279 each coordinate L-citrulline.

It belongs to the argininosuccinate synthase family. Type 1 subfamily. As to quaternary structure, homotetramer.

The protein localises to the cytoplasm. It catalyses the reaction L-citrulline + L-aspartate + ATP = 2-(N(omega)-L-arginino)succinate + AMP + diphosphate + H(+). Its pathway is amino-acid biosynthesis; L-arginine biosynthesis; L-arginine from L-ornithine and carbamoyl phosphate: step 2/3. The polypeptide is Argininosuccinate synthase (Mesorhizobium japonicum (strain LMG 29417 / CECT 9101 / MAFF 303099) (Mesorhizobium loti (strain MAFF 303099))).